A 155-amino-acid polypeptide reads, in one-letter code: Ribosomal RNA large subunit methyltransferase H (155 aa).

Residues leucine 72 and glycine 104 each coordinate S-adenosyl-L-methionine.

The protein belongs to the RNA methyltransferase RlmH family. In terms of assembly, homodimer.

It localises to the cytoplasm. The enzyme catalyses pseudouridine(1915) in 23S rRNA + S-adenosyl-L-methionine = N(3)-methylpseudouridine(1915) in 23S rRNA + S-adenosyl-L-homocysteine + H(+). In terms of biological role, specifically methylates the pseudouridine at position 1915 (m3Psi1915) in 23S rRNA. This Fusobacterium nucleatum subsp. nucleatum (strain ATCC 25586 / DSM 15643 / BCRC 10681 / CIP 101130 / JCM 8532 / KCTC 2640 / LMG 13131 / VPI 4355) protein is Ribosomal RNA large subunit methyltransferase H.